The chain runs to 812 residues: ATP-dependent zinc metalloprotease FtsH (812 aa).

The Cytoplasmic segment spans residues 1–21 (MPPSPPRPPKFPGSGRPESPN). Residues 22–42 (WGVWVMVLLIVGVLAFGFFTP) form a helical membrane-spanning segment. Residues 43–241 (ESFGLGPRKE…TKFKRESGSW (199 aa)) lie on the Extracellular side of the membrane. A helical transmembrane segment spans residues 242-262 (GGILLNLLPIVLILVILFFMF). Topologically, residues 263–812 (RAQSGGARGA…EFGKDGGEKK (550 aa)) are cytoplasmic. Position 333–340 (333–340 (GAPGTGKT)) interacts with ATP. Zn(2+) is bound at residue histidine 555. The active site involves glutamate 556. Positions 559 and 631 each coordinate Zn(2+). Residues 739–812 (KNPPARVTPP…EFGKDGGEKK (74 aa)) are disordered. Composition is skewed to basic and acidic residues over residues 757–785 (QPGK…RKME) and 803–812 (EFGKDGGEKK).

The protein in the central section; belongs to the AAA ATPase family. It in the C-terminal section; belongs to the peptidase M41 family. As to quaternary structure, homohexamer. It depends on Zn(2+) as a cofactor.

The protein resides in the cell membrane. Acts as a processive, ATP-dependent zinc metallopeptidase for both cytoplasmic and membrane proteins. Plays a role in the quality control of integral membrane proteins. The sequence is that of ATP-dependent zinc metalloprotease FtsH from Akkermansia muciniphila (strain ATCC BAA-835 / DSM 22959 / JCM 33894 / BCRC 81048 / CCUG 64013 / CIP 107961 / Muc).